Here is a 232-residue protein sequence, read N- to C-terminus: Large ribosomal subunit protein uL1 (232 aa).

The protein belongs to the universal ribosomal protein uL1 family. In terms of assembly, part of the 50S ribosomal subunit.

Its function is as follows. Binds directly to 23S rRNA. The L1 stalk is quite mobile in the ribosome, and is involved in E site tRNA release. In terms of biological role, protein L1 is also a translational repressor protein, it controls the translation of the L11 operon by binding to its mRNA. The sequence is that of Large ribosomal subunit protein uL1 from Phocaeicola vulgatus (strain ATCC 8482 / DSM 1447 / JCM 5826 / CCUG 4940 / NBRC 14291 / NCTC 11154) (Bacteroides vulgatus).